The chain runs to 475 residues: Flavin-dependent monooxygenase (475 aa).

This sequence belongs to the aromatic-ring hydroxylase family. FAD is required as a cofactor.

Its subcellular location is the cytoplasm. It carries out the reaction a tetracycline + NADPH + O2 + H(+) = an 11a-hydroxytetracycline + NADP(+) + H2O. The enzyme catalyses tetracycline + NADPH + O2 + H(+) = 11a-hydroxytetracycline + NADP(+) + H2O. With respect to regulation, inhibited by anhydrotetracycline. Functionally, an FAD-requiring monooxygenase active on some tetracycline antibiotic derivatives, which leads to their inactivation. Hydroxylates carbon 11a of tetracycline and some analogs. Confers resistance to tetracycline and doxycycline via an oxidoreductase activity; probably monooxygenates the antibiotics. Does not act on tigecycline. In Mycobacteroides abscessus (strain ATCC 19977 / DSM 44196 / CCUG 20993 / CIP 104536 / JCM 13569 / NCTC 13031 / TMC 1543 / L948) (Mycobacterium abscessus), this protein is Flavin-dependent monooxygenase.